Here is a 435-residue protein sequence, read N- to C-terminus: GTPase Der (435 aa).

EngA-type G domains lie at 4 to 167 and 175 to 350; these read PTLA…PSED and IKFS…ENQT. GTP contacts are provided by residues 10–17, 57–61, 119–122, 181–188, 228–232, and 293–296; these read GRPNVGKS, DTGGI, NKVD, DTAGI, and NKWD. The 85-residue stretch at 351-435 folds into the KH-like domain; the sequence is RRIQSSVLND…PIHIIARKRK (85 aa).

It belongs to the TRAFAC class TrmE-Era-EngA-EngB-Septin-like GTPase superfamily. EngA (Der) GTPase family. In terms of assembly, associates with the 50S ribosomal subunit.

Its function is as follows. GTPase that plays an essential role in the late steps of ribosome biogenesis. The protein is GTPase Der of Lacticaseibacillus paracasei (strain ATCC 334 / BCRC 17002 / CCUG 31169 / CIP 107868 / KCTC 3260 / NRRL B-441) (Lactobacillus paracasei).